Here is a 420-residue protein sequence, read N- to C-terminus: Type II methyltransferase M.HgiCI (420 aa).

The 416-residue stretch at 2–417 (LKFIDLFAGI…LDLFKSADLA (416 aa)) folds into the SAM-dependent MTase C5-type domain. Residue cysteine 75 is part of the active site.

Belongs to the class I-like SAM-binding methyltransferase superfamily. C5-methyltransferase family.

It carries out the reaction a 2'-deoxycytidine in DNA + S-adenosyl-L-methionine = a 5-methyl-2'-deoxycytidine in DNA + S-adenosyl-L-homocysteine + H(+). Its function is as follows. A methylase that recognizes the double-stranded sequence 5'-GGYRCC-3', methylates C-5 on both strands, and protects the DNA from cleavage by the HgiCI endonuclease. The protein is Type II methyltransferase M.HgiCI (hgiCIM) of Herpetosiphon aurantiacus (Herpetosiphon giganteus).